The primary structure comprises 501 residues: Aldehyde dehydrogenase 1A1 (501 aa).

Residue S2 is modified to N-acetylserine. N6-acetyllysine is present on residues K91 and K128. NAD(+)-binding positions include I167–N170, K193–E196, G226–P227, and G246–S247. K252 is subject to N6-acetyllysine. The active-site Proton acceptor is E269. Residue E269 to G271 coordinates NAD(+). C303 functions as the Nucleophile in the catalytic mechanism. Residues L336–S501 are mediates interaction with PRMT3. Phosphothreonine is present on T337. E349–K353 provides a ligand contact to NAD(+). N6-acetyllysine occurs at positions 353 and 367. Position 400 to 402 (E400 to F402) interacts with NAD(+). K410 carries the N6-acetyllysine modification. S413 is subject to Phosphoserine. An N6-acetyllysine mark is found at K419, K435, and K495.

This sequence belongs to the aldehyde dehydrogenase family. As to quaternary structure, homotetramer. Interacts with PRMT3; the interaction is direct, inhibits ALDH1A1 aldehyde dehydrogenase activity and is independent of the methyltransferase activity of PRMT3. The N-terminus is blocked most probably by acetylation. Expressed by erythrocytes (at protein level).

It is found in the cytoplasm. It localises to the cytosol. The protein resides in the cell projection. The protein localises to the axon. The enzyme catalyses an aldehyde + NAD(+) + H2O = a carboxylate + NADH + 2 H(+). The catalysed reaction is all-trans-retinal + NAD(+) + H2O = all-trans-retinoate + NADH + 2 H(+). It carries out the reaction 9-cis-retinal + NAD(+) + H2O = 9-cis-retinoate + NADH + 2 H(+). It catalyses the reaction 11-cis-retinal + NAD(+) + H2O = 11-cis-retinoate + NADH + 2 H(+). The enzyme catalyses 13-cis-retinal + NAD(+) + H2O = 13-cis-retinoate + NADH + 2 H(+). The catalysed reaction is 3-deoxyglucosone + NAD(+) + H2O = 2-dehydro-3-deoxy-D-gluconate + NADH + 2 H(+). It carries out the reaction (E)-4-hydroxynon-2-enal + NAD(+) + H2O = (E)-4-hydroxynon-2-enoate + NADH + 2 H(+). It catalyses the reaction malonaldehyde + NAD(+) + H2O = 3-oxopropanoate + NADH + 2 H(+). The enzyme catalyses hexanal + NAD(+) + H2O = hexanoate + NADH + 2 H(+). The catalysed reaction is propanal + NAD(+) + H2O = propanoate + NADH + 2 H(+). It carries out the reaction acetaldehyde + NAD(+) + H2O = acetate + NADH + 2 H(+). It catalyses the reaction benzaldehyde + NAD(+) + H2O = benzoate + NADH + 2 H(+). The enzyme catalyses 4-aminobutanal + NAD(+) + H2O = 4-aminobutanoate + NADH + 2 H(+). The protein operates within cofactor metabolism; retinol metabolism. With respect to regulation, inhibited by citral, disulfiram, and cyanamide. Activated by diethylstilbestrol. Inhibited by duocarmycin analogs. In terms of biological role, cytosolic dehydrogenase that catalyzes the irreversible oxidation of a wide range of aldehydes to their corresponding carboxylic acid. Functions downstream of retinol dehydrogenases and catalyzes the oxidation of retinaldehyde into retinoic acid, the second step in the oxidation of retinol/vitamin A into retinoic acid. This pathway is crucial to control the levels of retinol and retinoic acid, two important molecules which excess can be teratogenic and cytotoxic. Also oxidizes aldehydes resulting from lipid peroxidation like (E)-4-hydroxynon-2-enal/HNE, malonaldehyde and hexanal that form protein adducts and are highly cytotoxic. By participating for instance to the clearance of (E)-4-hydroxynon-2-enal/HNE in the lens epithelium prevents the formation of HNE-protein adducts and lens opacification. Also functions downstream of fructosamine-3-kinase in the fructosamine degradation pathway by catalyzing the oxidation of 3-deoxyglucosone, the carbohydrate product of fructosamine 3-phosphate decomposition, which is itself a potent glycating agent that may react with lysine and arginine side-chains of proteins. Also has an aminobutyraldehyde dehydrogenase activity and is probably part of an alternative pathway for the biosynthesis of GABA/4-aminobutanoate in midbrain, thereby playing a role in GABAergic synaptic transmission. The sequence is that of Aldehyde dehydrogenase 1A1 from Homo sapiens (Human).